The chain runs to 298 residues: Protoheme IX farnesyltransferase (298 aa).

The next 9 membrane-spanning stretches (helical) occupy residues Val-24–Pro-44, Leu-49–Phe-69, Leu-100–Pro-120, Leu-121–Leu-141, Ile-149–Gly-169, Ala-175–Leu-195, Leu-220–Gly-240, Trp-244–Leu-264, and Phe-277–Leu-297.

Belongs to the UbiA prenyltransferase family. Protoheme IX farnesyltransferase subfamily.

The protein localises to the cell inner membrane. The catalysed reaction is heme b + (2E,6E)-farnesyl diphosphate + H2O = Fe(II)-heme o + diphosphate. The protein operates within porphyrin-containing compound metabolism; heme O biosynthesis; heme O from protoheme: step 1/1. Functionally, converts heme B (protoheme IX) to heme O by substitution of the vinyl group on carbon 2 of heme B porphyrin ring with a hydroxyethyl farnesyl side group. This chain is Protoheme IX farnesyltransferase, found in Albidiferax ferrireducens (strain ATCC BAA-621 / DSM 15236 / T118) (Rhodoferax ferrireducens).